A 294-amino-acid chain; its full sequence is 4-diphosphocytidyl-2-C-methyl-D-erythritol kinase (294 aa).

Residue Lys-11 is part of the active site. 93–103 (PFGAGLGGGSS) contacts ATP. The active site involves Asp-135.

Belongs to the GHMP kinase family. IspE subfamily.

The enzyme catalyses 4-CDP-2-C-methyl-D-erythritol + ATP = 4-CDP-2-C-methyl-D-erythritol 2-phosphate + ADP + H(+). It participates in isoprenoid biosynthesis; isopentenyl diphosphate biosynthesis via DXP pathway; isopentenyl diphosphate from 1-deoxy-D-xylulose 5-phosphate: step 3/6. In terms of biological role, catalyzes the phosphorylation of the position 2 hydroxy group of 4-diphosphocytidyl-2C-methyl-D-erythritol. This is 4-diphosphocytidyl-2-C-methyl-D-erythritol kinase from Chlorobium phaeobacteroides (strain DSM 266 / SMG 266 / 2430).